We begin with the raw amino-acid sequence, 312 residues long: Malate dehydrogenase (312 aa).

Residues 7–13 (GAAGGIG) and aspartate 34 each bind NAD(+). 2 residues coordinate substrate: arginine 81 and arginine 87. NAD(+)-binding positions include asparagine 94 and 117–119 (ITN). Substrate contacts are provided by asparagine 119 and arginine 153. The active-site Proton acceptor is the histidine 177. Methionine 227 provides a ligand contact to NAD(+).

This sequence belongs to the LDH/MDH superfamily. MDH type 1 family. As to quaternary structure, homodimer.

It catalyses the reaction (S)-malate + NAD(+) = oxaloacetate + NADH + H(+). Catalyzes the reversible oxidation of malate to oxaloacetate. This chain is Malate dehydrogenase, found in Salmonella gallinarum (strain 287/91 / NCTC 13346).